The following is a 1138-amino-acid chain: BMP-2-inducible protein kinase (1138 aa).

Position 13 is a phosphoserine (serine 13). In terms of domain architecture, Protein kinase spans valine 48–phenylalanine 313. ATP is bound by residues leucine 54–valine 62 and lysine 76. Residue aspartate 177 is the Proton acceptor of the active site. Disordered stretches follow at residues threonine 355–glutamine 435, asparagine 638–alanine 831, and proline 906–threonine 1018. The segment covering isoleucine 358–threonine 390 has biased composition (polar residues). Residues valine 417–glutamine 435 show a composition bias toward low complexity. The residue at position 676 (serine 676) is a Phosphoserine. A compositionally biased stretch (polar residues) spans histidine 684 to serine 701. Positions lysine 706–serine 715 are enriched in basic and acidic residues. 3 positions are modified to phosphoserine: serine 733, serine 806, and serine 807. The segment covering aspartate 787–proline 813 has biased composition (basic and acidic residues). Position 819 is a phosphothreonine (threonine 819). Residue serine 908 is modified to Phosphoserine. Positions threonine 915–lysine 926 are enriched in polar residues. Positions valine 951–arginine 965 are enriched in basic residues. Residues serine 1010, serine 1012, serine 1013, serine 1020, serine 1022, serine 1087, and serine 1091 each carry the phosphoserine modification. Positions threonine 1117 to glutamine 1138 are disordered.

This sequence belongs to the protein kinase superfamily. Ser/Thr protein kinase family. Post-translationally, autophosphorylated. In terms of tissue distribution, expressed in osteocytes and osteoblasts.

It localises to the nucleus. It carries out the reaction L-seryl-[protein] + ATP = O-phospho-L-seryl-[protein] + ADP + H(+). The catalysed reaction is L-threonyl-[protein] + ATP = O-phospho-L-threonyl-[protein] + ADP + H(+). May be involved in osteoblast differentiation. In Mus musculus (Mouse), this protein is BMP-2-inducible protein kinase (Bmp2k).